Consider the following 226-residue polypeptide: Membrane protein (226 aa).

The Virion surface segment spans residues 1–11 (MSNGSIPVDEV). Residues 12 to 32 (IEHLRNWNFTWNIILTILLVV) traverse the membrane as a helical segment. The Intravirion portion of the chain corresponds to 33 to 41 (LQYGHYKYS). The helical transmembrane segment at 42–62 (VFLYGVKMAILWILWPLVLAL) threads the bilayer. The Virion surface segment spans residues 63-75 (SLFDAWASFQVNW). Residues 76 to 96 (VFFAFSILMACITLMLWIMYF) form a helical membrane-spanning segment. Topologically, residues 97-226 (VNSIRLWRRT…TDSEKVLHLV (130 aa)) are intravirion. Residues 200–216 (RSKHGDYSAVSNPSAVL) are interaction with N protein.

This sequence belongs to the alphacoronaviruses M protein family. Homomultimer. Interacts with envelope E protein in the budding compartment of the host cell, which is located between endoplasmic reticulum and the Golgi complex. Forms a complex with HE and S proteins. Interacts with nucleocapsid N protein. This interaction probably participates in RNA packaging into the virus.

It localises to the virion membrane. The protein resides in the host Golgi apparatus membrane. Its function is as follows. Component of the viral envelope that plays a central role in virus morphogenesis and assembly via its interactions with other viral proteins. This is Membrane protein from Sus scrofa (Pig).